The primary structure comprises 474 residues: E3 ubiquitin-protein ligase RNF14 (474 aa).

Residues 11 to 137 (DELLALASIY…QFLKEETLAY (127 aa)) form the RWD domain. The short motif at 37–45 (RIYLDLPQN) is the D-box element. Residues 216-457 (KLFLCSICFC…DPGSPCFNRL (242 aa)) are TRIAD supradomain. Zn(2+) is bound by residues C220, C223, C238, H240, C243, C246, C265, C270, C309, C314, C329, C332, C337, C340, and H345. The segment at 220–270 (CSICFCEKLGSECMYFLECRHVYCKACLKDYFEIQIRDGQVQCLNCPEPKC) adopts an RING-type 1 zinc-finger fold. An IBR-type zinc finger spans residues 289-350 (ARYDRLLLQS…RLTYHGVSPC (62 aa)). S348 carries the phosphoserine modification. C350 is a Zn(2+) binding site. A coiled-coil region spans residues 351-395 (KVTAEKLMDLRNEYLQADEANKRLLDQRYGKRVIQKALEEMESKE). Residues 361–474 (RNEYLQADEA…DDIWEDEVED (114 aa)) form an interaction with androgen receptor region. Zn(2+)-binding residues include C404 and C407. The RING-type 2; atypical zinc-finger motif lies at 404 to 433 (CPCCGTPIEKLDGCNKMTCTGCMQYFCWIC). The active site involves C417. The Zn(2+) site is built by C422, C425, C430, C433, H445, and C453.

This sequence belongs to the RBR family. RNF14 subfamily. In terms of assembly, interacts with GCN1; interaction takes place in response to ribosome collisions and is required for ubiquitination of EEF1A1/eEF1A. Interacts with the ubiquitin-conjugating enzymes UBE2E1 and UBE2E2. Interacts with AR/androgen receptor. Interacts with TCF7/TCF1, TCF7L1/TCF3 and TCF7L2/TCF4; promoting Wnt signaling. RING-type zinc finger-dependent and UBE2E2-dependent autoubiquitination. As to expression, widely expressed.

It localises to the cytoplasm. It is found in the nucleus. The enzyme catalyses [E2 ubiquitin-conjugating enzyme]-S-ubiquitinyl-L-cysteine + [acceptor protein]-L-lysine = [E2 ubiquitin-conjugating enzyme]-L-cysteine + [acceptor protein]-N(6)-ubiquitinyl-L-lysine.. Its pathway is protein modification; protein ubiquitination. E3 ubiquitin-protein ligase that plays a key role in the RNF14-RNF25 translation quality control pathway, a pathway that takes place when a ribosome has stalled during translation, and which promotes ubiquitination and degradation of translation factors on stalled ribosomes. Recruited to stalled ribosomes by the ribosome collision sensor GCN1 and mediates 'Lys-6'-linked ubiquitination of target proteins, leading to their degradation. Mediates ubiquitination of EEF1A1/eEF1A and ETF1/eRF1 translation factors on stalled ribosomes, leading to their degradation. Also catalyzes ubiquitination of ribosomal proteins RPL0, RPL1, RPL12, RPS13 and RPS17. Specifically required to resolve RNA-protein cross-links caused by reactive aldehydes, which trigger translation stress by stalling ribosomes: acts by catalying 'Lys-6'-linked ubiquitination of RNA-protein cross-links, leading to their removal by the ATP-dependent unfoldase VCP and subsequent degradation by the proteasome. Independently of its function in the response to stalled ribosomes, acts as a regulator of transcription in Wnt signaling via its interaction with TCF transcription factors (TCF7/TCF1, TCF7L1/TCF3 and TCF7L2/TCF4). May also play a role as a coactivator for androgen- and, to a lesser extent, progesterone-dependent transcription. This chain is E3 ubiquitin-protein ligase RNF14, found in Homo sapiens (Human).